The following is a 431-amino-acid chain: Glutamate-1-semialdehyde 2,1-aminomutase 1 (431 aa).

The residue at position 268 (K268) is an N6-(pyridoxal phosphate)lysine.

It belongs to the class-III pyridoxal-phosphate-dependent aminotransferase family. HemL subfamily. In terms of assembly, homodimer. Requires pyridoxal 5'-phosphate as cofactor.

It is found in the cytoplasm. It catalyses the reaction (S)-4-amino-5-oxopentanoate = 5-aminolevulinate. The protein operates within porphyrin-containing compound metabolism; protoporphyrin-IX biosynthesis; 5-aminolevulinate from L-glutamyl-tRNA(Glu): step 2/2. This Anoxybacillus flavithermus (strain DSM 21510 / WK1) protein is Glutamate-1-semialdehyde 2,1-aminomutase 1.